Reading from the N-terminus, the 543-residue chain is ATP synthase subunit alpha (543 aa).

174–181 (GDRQTGKT) is an ATP binding site. Residues 521 to 543 (VEKKPDVDKAAPVDQEKIVAGEK) are disordered.

It belongs to the ATPase alpha/beta chains family. As to quaternary structure, F-type ATPases have 2 components, CF(1) - the catalytic core - and CF(0) - the membrane proton channel. CF(1) has five subunits: alpha(3), beta(3), gamma(1), delta(1), epsilon(1). CF(0) has three main subunits: a(1), b(2) and c(9-12). The alpha and beta chains form an alternating ring which encloses part of the gamma chain. CF(1) is attached to CF(0) by a central stalk formed by the gamma and epsilon chains, while a peripheral stalk is formed by the delta and b chains.

It is found in the cell membrane. The catalysed reaction is ATP + H2O + 4 H(+)(in) = ADP + phosphate + 5 H(+)(out). Produces ATP from ADP in the presence of a proton gradient across the membrane. The alpha chain is a regulatory subunit. The sequence is that of ATP synthase subunit alpha from Bifidobacterium longum (strain DJO10A).